The primary structure comprises 238 residues: Succinate dehydrogenase iron-sulfur subunit (238 aa).

A 2Fe-2S ferredoxin-type domain is found at 1–97 (MKLEFSIYRY…KIVIRPLPGL (97 aa)). The [2Fe-2S] cluster site is built by Cys55, Cys60, and Cys75. The region spanning 139 to 169 (QREKLDGLYECILCACCSTSCPSFWWNPDKF) is the 4Fe-4S ferredoxin-type domain. [4Fe-4S] cluster is bound by residues Cys149, Cys152, and Cys155. Cys159 provides a ligand contact to [3Fe-4S] cluster. Trp164 contacts a ubiquinone. Residues Cys206 and Cys212 each coordinate [3Fe-4S] cluster. Cys216 provides a ligand contact to [4Fe-4S] cluster.

The protein belongs to the succinate dehydrogenase/fumarate reductase iron-sulfur protein family. In terms of assembly, part of an enzyme complex containing four subunits: a flavoprotein, an iron-sulfur, cytochrome b-556, and a hydrophobic anchor protein. [2Fe-2S] cluster serves as cofactor. [3Fe-4S] cluster is required as a cofactor. The cofactor is [4Fe-4S] cluster.

The catalysed reaction is a quinone + succinate = fumarate + a quinol. It participates in carbohydrate metabolism; tricarboxylic acid cycle; fumarate from succinate (bacterial route): step 1/1. Two distinct, membrane-bound, FAD-containing enzymes are responsible for the catalysis of fumarate and succinate interconversion; the fumarate reductase is used in anaerobic growth, and the succinate dehydrogenase is used in aerobic growth. This is Succinate dehydrogenase iron-sulfur subunit (sdhB) from Salmonella typhimurium (strain LT2 / SGSC1412 / ATCC 700720).